The following is a 235-amino-acid chain: uncharacterized protein (235 aa).

It belongs to the UreF family.

The protein resides in the cytoplasm. It localises to the nucleus. Its function is as follows. Probably facilitates nickel incorporation. This is an uncharacterized protein from Schizosaccharomyces pombe (strain 972 / ATCC 24843) (Fission yeast).